We begin with the raw amino-acid sequence, 226 residues long: ATP-dependent Clp protease proteolytic subunit 4 (226 aa).

S122 acts as the Nucleophile in catalysis. The active site involves H147.

This sequence belongs to the peptidase S14 family. In terms of assembly, fourteen ClpP subunits assemble into 2 heptameric rings which stack back to back to give a disk-like structure with a central cavity, resembling the structure of eukaryotic proteasomes.

It is found in the cytoplasm. The enzyme catalyses Hydrolysis of proteins to small peptides in the presence of ATP and magnesium. alpha-casein is the usual test substrate. In the absence of ATP, only oligopeptides shorter than five residues are hydrolyzed (such as succinyl-Leu-Tyr-|-NHMec, and Leu-Tyr-Leu-|-Tyr-Trp, in which cleavage of the -Tyr-|-Leu- and -Tyr-|-Trp bonds also occurs).. Functionally, cleaves peptides in various proteins in a process that requires ATP hydrolysis. Has a chymotrypsin-like activity. Plays a major role in the degradation of misfolded proteins. This is ATP-dependent Clp protease proteolytic subunit 4 from Streptomyces avermitilis (strain ATCC 31267 / DSM 46492 / JCM 5070 / NBRC 14893 / NCIMB 12804 / NRRL 8165 / MA-4680).